We begin with the raw amino-acid sequence, 352 residues long: N-acetyl-gamma-glutamyl-phosphate reductase (352 aa).

Cys-155 is an active-site residue.

It belongs to the NAGSA dehydrogenase family. Type 1 subfamily.

Its subcellular location is the cytoplasm. The catalysed reaction is N-acetyl-L-glutamate 5-semialdehyde + phosphate + NADP(+) = N-acetyl-L-glutamyl 5-phosphate + NADPH + H(+). The protein operates within amino-acid biosynthesis; L-arginine biosynthesis; N(2)-acetyl-L-ornithine from L-glutamate: step 3/4. Functionally, catalyzes the NADPH-dependent reduction of N-acetyl-5-glutamyl phosphate to yield N-acetyl-L-glutamate 5-semialdehyde. The polypeptide is N-acetyl-gamma-glutamyl-phosphate reductase (Picosynechococcus sp. (strain ATCC 27264 / PCC 7002 / PR-6) (Agmenellum quadruplicatum)).